Reading from the N-terminus, the 98-residue chain is N(2)-fixation sustaining protein CowN (98 aa).

It belongs to the CowN family.

Is required to sustain N(2)-dependent growth in the presence of low levels of carbon monoxide (CO). Probably acts by protecting the N(2) fixation ability of the nitrogenase complex, which is inactivated in the presence of CO. The sequence is that of N(2)-fixation sustaining protein CowN from Dechloromonas aromatica (strain RCB).